Reading from the N-terminus, the 551-residue chain is MRSTPHWKEAVVYQVYPRSFMDSNGDGTGDLNGIISKLDYLQQLGITLLWLSPVYRSPMDDNGYDISDYEEIADIFGSMSDMERLIAEAKARDIGILMDLVVNHTSDEHPWFIDALSSKNSAYRDFYIWRAPAADGGPPDDSRSNFGGSAWTLDEASGEYYLHQFSTRQPDLNWENPRVREAIHAMMNRWLDKGIGGFRMDVIDLIGKEVDPQIMANGRHPHLYLQQMNRATFGPRGSVTVGETWSATPEDALLYSAEERQERQELTMVFQFEHIKLFWDEQYGKWCNQPFDLLRFKAVIDKWQTALADHGWNSLFWSNHDLPRAVSKFGDDGEYRVVSAKMLATALHCLKGTPYIYQGEEIGMTNVNFADIDDYRDIESLNLYQERIAEGMSHEAMMRGIHANGPDNARTPMQWTAVHMPGLPPVSPGLRLILTSGQWNVAAALDDPDSVFYHYQKLVALRKQLPLLVHGDFRQIVVEHPQVFAWLRTLGEQTLVVINNFTRDAVMLAIPDNLQSQQGRCLINNYAPREQLEPIMELQPYESFALLIERL.

Residue D201 is the Nucleophile of the active site. E243 acts as the Proton donor in catalysis.

It belongs to the glycosyl hydrolase 13 family.

It carries out the reaction 6-O-alpha-D-glucopyranosyl-D-fructose + H2O = alpha-D-glucose + D-fructose. The protein operates within glycan degradation; palatinose degradation. In terms of biological role, catalyzes the hydrolysis of palatinose. Shows a strict specificity toward palatinose, and cannot release glucose from the disaccharides sucrose, maltose, trehalose and melibiose. Involved in the degradation of palatinose, a sucrose isomer that is formed as a reserve material under conditions of excess carbon availability, sequestered in a form unavailable to competitors such as fungi or the host plant, and whose consumption appears to be postponed until the preferentially metabolized carbon source (e.g. sucrose) is depleted. This Erwinia rhapontici (Pectobacterium rhapontici) protein is Palatinase.